Reading from the N-terminus, the 132-residue chain is Large ribosomal subunit protein bL17 (132 aa).

Belongs to the bacterial ribosomal protein bL17 family. Part of the 50S ribosomal subunit. Contacts protein L32.

This is Large ribosomal subunit protein bL17 from Saccharophagus degradans (strain 2-40 / ATCC 43961 / DSM 17024).